Here is a 774-residue protein sequence, read N- to C-terminus: FT-interacting protein 7 (774 aa).

Over residues 1–17 the composition is skewed to basic and acidic residues; that stretch reads MMQRPFRPEEYSLKETS. A disordered region spans residues 1–25; sequence MMQRPFRPEEYSLKETSPHLGGGAA. 3 consecutive C2 domains span residues 23-143, 182-305, and 346-472; these read GAAG…PQWY, IPGD…SQWY, and YSSD…THAY. Ca(2+) contacts are provided by aspartate 56, aspartate 62, aspartate 109, aspartate 111, and aspartate 116. Transmembrane regions (helical) follow at residues 575–595, 606–626, and 714–734; these read IMGVLSPLIAVAKWFDQICHW, ILFVILVLYPELILPTIFLYL, and ATALFVTFCFVAAIVLYVTPF.

This sequence belongs to the MCTP family. As to quaternary structure, interacts with OSH1. The cofactor is Ca(2+). As to expression, expressed in roots, stems, lemma, palea, pistils and ovules. Expressed at low levels in leaves.

It localises to the cell membrane. Its function is as follows. Promotes nuclear translocation of the transcription factor OSH1, which directly suppresses the auxin biosynthetic gene YUCCA4 during the late development of anthers. Reduction of auxin levels at late stage of anther development, after meiosis of microspore mother cells, is necessary for normal anther dehiscence and seed setting. Required for jasmonate (JA) biosynthetic genes expression and JA production in anthers. The polypeptide is FT-interacting protein 7 (Oryza sativa subsp. japonica (Rice)).